Reading from the N-terminus, the 436-residue chain is bZIP transcription factor RISBZ1 (436 aa).

The required for transactivation activity stretch occupies residues 1-27 (MEHVFAVDEIPDPLWAPPPPVQPAAAA). The disordered stretch occupies residues 182-258 (LSPGPNGGSG…SARRSRSRKA (77 aa)). The span at 215–225 (PSEDDDMEGDA) shows a compositional bias: acidic residues. In terms of domain architecture, bZIP spans 236 to 299 (EDKVKKRKES…SAAAIDNRVL (64 aa)). The basic motif stretch occupies residues 238–257 (KVKKRKESNRESARRSRSRK). Residues 264-278 (LEEQVSLLRVENSSL) are leucine-zipper.

As to quaternary structure, homodimer. Forms heterodimers with RISBZ2/BZP33 and RISBZ3/BZP20. Interacts with DOF3/RPBF. Specifically expressed in seeds. Expressed in aleurone and subaleurone layers of maturing seeds, but not in the embryo tissues.

Its subcellular location is the nucleus. Transcriptional activator that binds to the DNA specific sequence 5'-TGAGTCA-3' found in seed storage protein gene promoters. Involved in the endosperm-specific regulation of storage protein genes. Can activate the expression of genes encoding for the seed storage proteins glutelin, prolamin, globulin and the allergen RAG1. Functions synergistically with DOF3/RPBF to positively regulate quantitatively many seed storage protein genes. Functions synergistically with DOF3/RPBF to positively regulate some metabolic enzymes, such as alanine aminotransferase and pyruvate phosphate dikinase, that are expressed in developing seeds. Functions synergistically with DOF3/RPBF to positively regulate genes that are key players in the development of aleurone layers. Functions synergistically with DOF3/RPBF to positively regulate the glutelin GLUD-1 gene in endosperm of developing seeds. Can activate the expression of the bifunctional lysine-degrading enzyme, lysine ketoglutarate reductase/saccharopine dehydrogenase (LKR/SDH), one of the key regulators determining free lysine content in plants. Functions as a key regulator of starch synthesis in seeds, by direct binding to the promoters of starch-synthesizing genes, such as AGPL3, WAXXY and SBE1. In Oryza sativa subsp. japonica (Rice), this protein is bZIP transcription factor RISBZ1.